The sequence spans 1293 residues: Phosphoribosylformylglycinamidine synthase (1293 aa).

Residues 305-316 and A676 each bind ATP; that span reads GAATGSGGEIRD. Residues 305–327 are disordered; that stretch reads GAATGSGGEIRDEGATGRGSKPK. D677, E716, N720, and D884 together coordinate Mg(2+). S886 provides a ligand contact to ATP. The Glutamine amidotransferase type-1 domain occupies 1040 to 1293; it reads MAILREQGVN…MFRNARVNLG (254 aa). Residue C1133 is the Nucleophile of the active site. Active-site residues include H1258 and E1260.

It in the N-terminal section; belongs to the FGAMS family. As to quaternary structure, monomer.

Its subcellular location is the cytoplasm. It carries out the reaction N(2)-formyl-N(1)-(5-phospho-beta-D-ribosyl)glycinamide + L-glutamine + ATP + H2O = 2-formamido-N(1)-(5-O-phospho-beta-D-ribosyl)acetamidine + L-glutamate + ADP + phosphate + H(+). It participates in purine metabolism; IMP biosynthesis via de novo pathway; 5-amino-1-(5-phospho-D-ribosyl)imidazole from N(2)-formyl-N(1)-(5-phospho-D-ribosyl)glycinamide: step 1/2. Its function is as follows. Phosphoribosylformylglycinamidine synthase involved in the purines biosynthetic pathway. Catalyzes the ATP-dependent conversion of formylglycinamide ribonucleotide (FGAR) and glutamine to yield formylglycinamidine ribonucleotide (FGAM) and glutamate. The polypeptide is Phosphoribosylformylglycinamidine synthase (Shewanella sp. (strain MR-4)).